A 376-amino-acid chain; its full sequence is Mitogen-activated protein kinase ERK-A (376 aa).

Residues 38–326 (YIKLAYIGEG…VEEALAHPYL (289 aa)) form the Protein kinase domain. ATP is bound by residues 44-52 (IGEGAYGMV) and K67. D162 acts as the Proton acceptor in catalysis. At T198 the chain carries Phosphothreonine. The TXY motif lies at 198–200 (TEY). At Y200 the chain carries Phosphotyrosine.

This sequence belongs to the protein kinase superfamily. CMGC Ser/Thr protein kinase family. MAP kinase subfamily. Mg(2+) serves as cofactor. Dually phosphorylated on Thr-198 and Tyr-200, which activates the enzyme. Phosphorylated on tyrosine residue(s) in response to insulin. In third instar larvae, expressed in eye imaginal disks. In adults, expressed in head and body.

The protein localises to the cytoplasm. Its subcellular location is the nucleus. It catalyses the reaction L-seryl-[protein] + ATP = O-phospho-L-seryl-[protein] + ADP + H(+). The enzyme catalyses L-threonyl-[protein] + ATP = O-phospho-L-threonyl-[protein] + ADP + H(+). With respect to regulation, activated by tyrosine and threonine phosphorylation. Its function is as follows. Serine/threonine kinase which acts as an essential component of the MAP kinase signal transduction pathway to regulate proliferation, differentiation and effect cell fate decisions in various tissues. Required downstream of phl/Raf in the sev/sevenless, tor/torso, and EGF receptor homolog Egfr signal transduction pathways. Required for embryonic epithelial tissue repair. During larval development, mediates Ptth/tor signaling leading to the production of ecdysone, a hormone required for the initiation of metamorphosis. The chain is Mitogen-activated protein kinase ERK-A from Drosophila melanogaster (Fruit fly).